Reading from the N-terminus, the 354-residue chain is 2-methylisoborneol synthase (354 aa).

The tract at residues 1-29 (MIELIGHETPVPSQQQHTGGVRGTSACTP) is disordered. D113, D114, E118, N264, S268, and E272 together coordinate Mg(2+).

Belongs to the terpene synthase family. 2-methylisoborneol synthase subfamily. Mg(2+) is required as a cofactor.

The catalysed reaction is (E)-2-methylgeranyl diphosphate + H2O = 2-methylisoborneol + diphosphate. Functionally, catalyzes the cyclization of 2-methylgeranyl diphosphate (2-MeGPP) to 2-methylisoborneol (2-MIB), which likely involves the intermediacy of 2-methyllinalyl diphosphate. This is 2-methylisoborneol synthase from Saccharopolyspora erythraea (strain ATCC 11635 / DSM 40517 / JCM 4748 / NBRC 13426 / NCIMB 8594 / NRRL 2338).